A 260-amino-acid polypeptide reads, in one-letter code: 3'-5' ssDNA/RNA exonuclease TatD (260 aa).

Residues Glu91, His127, and His152 each coordinate a divalent metal cation.

It belongs to the metallo-dependent hydrolases superfamily. TatD-type hydrolase family. TatD subfamily. Monomer. Requires Mg(2+) as cofactor.

The protein resides in the cytoplasm. Functionally, 3'-5' exonuclease that prefers single-stranded DNA and RNA. May play a role in the H(2)O(2)-induced DNA damage repair. This chain is 3'-5' ssDNA/RNA exonuclease TatD, found in Enterobacter lignolyticus (strain SCF1).